The chain runs to 404 residues: Cysteine desulfurase IscS (404 aa).

Residues 73–74, Asn153, Gln181, and 201–203 contribute to the pyridoxal 5'-phosphate site; these read AT and SAH. Residue Lys204 is modified to N6-(pyridoxal phosphate)lysine. Thr241 contributes to the pyridoxal 5'-phosphate binding site. Cys327 acts as the Cysteine persulfide intermediate in catalysis. [2Fe-2S] cluster is bound at residue Cys327.

Belongs to the class-V pyridoxal-phosphate-dependent aminotransferase family. NifS/IscS subfamily. As to quaternary structure, homodimer. Forms a heterotetramer with IscU, interacts with other sulfur acceptors. It depends on pyridoxal 5'-phosphate as a cofactor.

It is found in the cytoplasm. It carries out the reaction (sulfur carrier)-H + L-cysteine = (sulfur carrier)-SH + L-alanine. It functions in the pathway cofactor biosynthesis; iron-sulfur cluster biosynthesis. Functionally, master enzyme that delivers sulfur to a number of partners involved in Fe-S cluster assembly, tRNA modification or cofactor biosynthesis. Catalyzes the removal of elemental sulfur atoms from cysteine to produce alanine. Functions as a sulfur delivery protein for Fe-S cluster synthesis onto IscU, an Fe-S scaffold assembly protein, as well as other S acceptor proteins. In Anaeromyxobacter sp. (strain Fw109-5), this protein is Cysteine desulfurase IscS.